A 67-amino-acid chain; its full sequence is Small integral membrane protein 20 (67 aa).

At 1 to 6 (MSRNLR) the chain is on the mitochondrial matrix side. The chain crosses the membrane as a helical span at residues 7-27 (TALIFGGFISLIGAAFYPIYF). Residues 28–67 (RPLMRLEEYKKEQAINRAGIVQEDVQPPGLKVWSDPFGRK) lie on the Mitochondrial intermembrane side of the membrane. Position 64 is a phenylalanine amide (Phe-64).

Component of the MITRAC (mitochondrial translation regulation assembly intermediate of cytochrome c oxidase complex) complex, the core components of this complex being COA3/MITRAC12 and COX14. Interacts with COA3/MITRAC12 and COX4I1. Directly interacts with newly synthesized MT-CO1/COX1. In terms of tissue distribution, expressed in the ovary, specifically in granulosa cells of follicles that have passed the primary stage and in oocytes (at protein level).

It localises to the mitochondrion inner membrane. The protein resides in the secreted. Its function is as follows. Component of the MITRAC (mitochondrial translation regulation assembly intermediate of cytochrome c oxidase complex) complex, that regulates cytochrome c oxidase assembly. Promotes the progression of complex assembly after the association of MT-CO1/COX1 with COX4I1 and COX6C. Chaperone-like assembly factor required to stabilize newly synthesized MT-CO1/COX1 and to prevent its premature turnover. In terms of biological role, peptide involved in a broad spectrum of regulatory functions. Is a ligand for GPR173. As part of the reproductive cycle, it regulates gonadotropin-releasing hormone (GnRH) signaling in the hypothalamus and pituitary gland which augments the release of luteinizing hormone. Plays a protective role in memory retention through activation of GNRHR. Regulates the secretion of AVP by hypothalamic neurons. Plays a role in the transduction of the itch sensation. Induces anxiolytic effects, reducing behavior associated with anxiety. Regulates food intake as well as satiation and satiety. In the ovary, it regulates follicular growth by stimulating granulosa cell proliferation by increasing the expression of GPR173, CREB1, CYP19A1, KITLG, FSHR, and LHCGR. It also increases the production of estradiol (E2). In the heart, it regulates contractility and relaxation. It also plays a cardioprotective role during ischemia, where it activates the SAFE and RISK pathways. Stimulates the proliferation and differentiation of preadipocytes. In pancreatic islet cells, it induces proliferation of islet cells as well as the production of INS. The chain is Small integral membrane protein 20 (SMIM20) from Homo sapiens (Human).